A 150-amino-acid polypeptide reads, in one-letter code: Large ribosomal subunit protein bL9 (150 aa).

The protein belongs to the bacterial ribosomal protein bL9 family.

Its function is as follows. Binds to the 23S rRNA. This chain is Large ribosomal subunit protein bL9, found in Burkholderia mallei (strain NCTC 10247).